An 82-amino-acid chain; its full sequence is Acyl carrier protein (82 aa).

The Carrier domain occupies S3–I77. An O-(pantetheine 4'-phosphoryl)serine modification is found at S37.

The protein belongs to the acyl carrier protein (ACP) family. 4'-phosphopantetheine is transferred from CoA to a specific serine of apo-ACP by AcpS. This modification is essential for activity because fatty acids are bound in thioester linkage to the sulfhydryl of the prosthetic group.

It is found in the plastid. The protein localises to the chloroplast. The protein operates within lipid metabolism; fatty acid biosynthesis. Carrier of the growing fatty acid chain in fatty acid biosynthesis. The chain is Acyl carrier protein from Gracilaria tenuistipitata var. liui (Red alga).